The following is a 504-amino-acid chain: Probable cytochrome P450 513F1 (504 aa).

The helical transmembrane segment at 1–21 (MILSLLFLFVITLYFLIPSRI) threads the bilayer. C449 contributes to the heme binding site.

Belongs to the cytochrome P450 family. Heme serves as cofactor.

The protein localises to the membrane. In Dictyostelium discoideum (Social amoeba), this protein is Probable cytochrome P450 513F1 (cyp513F1).